The primary structure comprises 421 residues: eIF5-mimic protein 1 (421 aa).

The interval M1–K24 is disordered. Residues T250–E417 form the W2 domain.

It belongs to the BZW family.

It is found in the cytoplasm. Its function is as follows. Translation initiation regulator which may repress non-AUG initiated translation and repeat-associated non-AUG (RAN) initiated translation by acting as a competitive inhibitor of eukaryotic translation initiation factor 5 (EIF5) function. In Danio rerio (Zebrafish), this protein is eIF5-mimic protein 1 (bzw2).